The primary structure comprises 226 residues: MNPNIAKISSLLSDPSRSSILLSLMDGRIHPAGELAYLANIKPQTASFHLNKLLEAKLISVEKHGRHRYYRLADSDAANVIEQLLHIAPKAKVKSLKESKEKKDLHFARTCYDHLAGYVGVQMAHSLVEQGMLKKVDLNFEVTSEGALFFSKLGINEEQQRNKRRAFARCCLDWSERQHHIAGALGNALLVRMLEEEWIVRMPKTRAIRITQSGKIAFEKHLNVKI.

The 92-residue stretch at 1–92 (MNPNIAKISS…QLLHIAPKAK (92 aa)) folds into the HTH arsR-type domain. The H-T-H motif DNA-binding region spans 32-55 (AGELAYLANIKPQTASFHLNKLLE).

This is an uncharacterized protein from Bacillus subtilis (strain 168).